Reading from the N-terminus, the 287-residue chain is MERRWVFVLLDVLCVLVAALPCAILTFVNTPYKRGFYCGDDSIRYPYRPDTITHGLMAGVIITATVILVSAGEAYLVYTDRLYSRSDFNNYLAALYKVVGTFLFGAAVSQSLTDLAKYMTGRLRPNFLAVCDPDWSRVNCSAYVQVEVCRGSSANVTESRLSFYSGHSSFGMYCMVFLALYVQARLCWKWARLLRPTVQFFLVAFALYVGYTRVSDHKHHWSDVLVGLLQGALVASLTVRYISDFFKARPPQHCPEEEDLERKPSLSLTLALGETDCNHYGYPVSSS.

Residues 1–4 (MERR) lie on the Cytoplasmic side of the membrane. The helical transmembrane segment at 5–25 (WVFVLLDVLCVLVAALPCAIL) threads the bilayer. The Lumenal portion of the chain corresponds to 26–51 (TFVNTPYKRGFYCGDDSIRYPYRPDT). Residues 52–72 (ITHGLMAGVIITATVILVSAG) form a helical membrane-spanning segment. The Cytoplasmic portion of the chain corresponds to 73-87 (EAYLVYTDRLYSRSD). The helical transmembrane segment at 88–108 (FNNYLAALYKVVGTFLFGAAV) threads the bilayer. At 109 to 161 (SQSLTDLAKYMTGRLRPNFLAVCDPDWSRVNCSAYVQVEVCRGSSANVTESRL) the chain is on the lumenal side. Residues 117–125 (KYMTGRLRP) are phosphatase sequence motif I. N-linked (GlcNAc...) asparagine glycans are attached at residues asparagine 139 and asparagine 155. A helical membrane pass occupies residues 162 to 182 (SFYSGHSSFGMYCMVFLALYV). The phosphatase sequence motif II stretch occupies residues 164 to 167 (YSGH). Catalysis depends on histidine 167, which acts as the Proton donors. Over 183–193 (QARLCWKWARL) the chain is Cytoplasmic. A helical transmembrane segment spans residues 194–211 (LRPTVQFFLVAFALYVGY). Residues 212–218 (TRVSDHK) are Lumenal-facing. Residues 212–223 (TRVSDHKHHWSD) are phosphatase sequence motif III. The active-site Nucleophile is histidine 219. Residues 219–239 (HHWSDVLVGLLQGALVASLTV) form a helical membrane-spanning segment. Residues 240–287 (RYISDFFKARPPQHCPEEEDLERKPSLSLTLALGETDCNHYGYPVSSS) are Cytoplasmic-facing.

This sequence belongs to the PA-phosphatase related phosphoesterase family. As to quaternary structure, forms functional homodimers and homooligomers. Can also form heterooligomers with PLPP1 and PLPP3. N-glycosylated.

The protein localises to the membrane. It is found in the cell membrane. It localises to the early endosome membrane. Its subcellular location is the endoplasmic reticulum membrane. It catalyses the reaction a 1,2-diacyl-sn-glycero-3-phosphate + H2O = a 1,2-diacyl-sn-glycerol + phosphate. The catalysed reaction is 1,2-dihexadecanoyl-sn-glycero-3-phosphate + H2O = 1,2-dihexadecanoyl-sn-glycerol + phosphate. The enzyme catalyses 1,2-di-(9Z-octadecenoyl)-sn-glycero-3-phosphate + H2O = 1,2-di-(9Z-octadecenoyl)-sn-glycerol + phosphate. It carries out the reaction a monoacyl-sn-glycero-3-phosphate + H2O = a monoacylglycerol + phosphate. It catalyses the reaction (9Z)-octadecenoyl-sn-glycero-3-phosphate + H2O = (9Z-octadecenoyl)-glycerol + phosphate. The catalysed reaction is sphing-4-enine 1-phosphate + H2O = sphing-4-enine + phosphate. The enzyme catalyses an N-acylsphing-4-enine 1-phosphate + H2O = an N-acylsphing-4-enine + phosphate. It carries out the reaction N-(octanoyl)-sphing-4-enine-1-phosphate + H2O = N-octanoylsphing-4-enine + phosphate. It catalyses the reaction N-(9Z-octadecenoyl)-ethanolamine phosphate + H2O = N-(9Z-octadecenoyl) ethanolamine + phosphate. Its pathway is lipid metabolism; phospholipid metabolism. With respect to regulation, magnesium-independent phospholipid phosphatase. Insensitive to N-ethylmaleimide. In terms of biological role, magnesium-independent phospholipid phosphatase that catalyzes the dephosphorylation of a variety of glycerolipid and sphingolipid phosphate esters including phosphatidate/PA, lysophosphatidate/LPA, sphingosine 1-phosphate/S1P and ceramide 1-phosphate/C1P. Has no apparent extracellular phosphatase activity and therefore most probably acts intracellularly. Also acts on N-oleoyl ethanolamine phosphate/N-(9Z-octadecenoyl)-ethanolamine phosphate, a potential physiological compound. Through dephosphorylation of these bioactive lipid mediators produces new bioactive compounds and may regulate signal transduction in different cellular processes. Indirectly regulates, for instance, cell cycle G1/S phase transition through its phospholipid phosphatase activity. The protein is Phospholipid phosphatase 2 of Bos taurus (Bovine).